The chain runs to 179 residues: Large ribosomal subunit protein uL5 (179 aa).

The protein belongs to the universal ribosomal protein uL5 family. As to quaternary structure, part of the 50S ribosomal subunit; part of the 5S rRNA/L5/L18/L25 subcomplex. Contacts the 5S rRNA and the P site tRNA. Forms a bridge to the 30S subunit in the 70S ribosome.

Functionally, this is one of the proteins that bind and probably mediate the attachment of the 5S RNA into the large ribosomal subunit, where it forms part of the central protuberance. In the 70S ribosome it contacts protein S13 of the 30S subunit (bridge B1b), connecting the 2 subunits; this bridge is implicated in subunit movement. Contacts the P site tRNA; the 5S rRNA and some of its associated proteins might help stabilize positioning of ribosome-bound tRNAs. The chain is Large ribosomal subunit protein uL5 from Microcystis aeruginosa (strain NIES-843 / IAM M-2473).